Here is a 97-residue protein sequence, read N- to C-terminus: Large ribosomal subunit protein uL23 (97 aa).

It belongs to the universal ribosomal protein uL23 family. In terms of assembly, part of the 50S ribosomal subunit. Contacts protein L29, and trigger factor when it is bound to the ribosome.

In terms of biological role, one of the early assembly proteins it binds 23S rRNA. One of the proteins that surrounds the polypeptide exit tunnel on the outside of the ribosome. Forms the main docking site for trigger factor binding to the ribosome. The polypeptide is Large ribosomal subunit protein uL23 (Sinorhizobium fredii (strain NBRC 101917 / NGR234)).